A 559-amino-acid polypeptide reads, in one-letter code: Cellulose biosynthesis protein BcsG (559 aa).

4 consecutive transmembrane segments (helical) span residues Leu-34–Leu-54, His-68–Pro-88, Phe-113–Ser-133, and Ile-138–Ser-158.

The protein localises to the cell inner membrane. The protein is Cellulose biosynthesis protein BcsG (bcsG) of Escherichia coli (strain K12).